We begin with the raw amino-acid sequence, 117 residues long: uncharacterized protein (117 aa).

The N-terminal stretch at 1 to 24 (MMTEFGSAMTLVTGLVAYGAYVKS) is a signal peptide. The segment at 42-117 (EKENFNYNNN…NNQIKRRLFD (76 aa)) is disordered. Over residues 46-95 (FNYNNNNNNNNNNNNNNSNNNDNNNNNNSNSNNNNNNNNNNNNNNNNNIN) the composition is skewed to low complexity. Asparagine 61 and asparagine 72 each carry an N-linked (GlcNAc...) asparagine glycan. Residues 96–110 (DKQINGTNIFDSNNQ) show a composition bias toward polar residues.

It localises to the secreted. This is an uncharacterized protein from Dictyostelium discoideum (Social amoeba).